The primary structure comprises 565 residues: Sulfite reductase [NADPH] hemoprotein beta-component (565 aa).

Residues cysteine 429, cysteine 435, cysteine 474, and cysteine 478 each contribute to the [4Fe-4S] cluster site. Cysteine 478 is a siroheme binding site.

The protein belongs to the nitrite and sulfite reductase 4Fe-4S domain family. In terms of assembly, alpha(8)-beta(8). The alpha component is a flavoprotein, the beta component is a hemoprotein. Requires siroheme as cofactor. [4Fe-4S] cluster serves as cofactor.

It catalyses the reaction hydrogen sulfide + 3 NADP(+) + 3 H2O = sulfite + 3 NADPH + 4 H(+). It participates in sulfur metabolism; hydrogen sulfide biosynthesis; hydrogen sulfide from sulfite (NADPH route): step 1/1. Its function is as follows. Component of the sulfite reductase complex that catalyzes the 6-electron reduction of sulfite to sulfide. This is one of several activities required for the biosynthesis of L-cysteine from sulfate. The protein is Sulfite reductase [NADPH] hemoprotein beta-component of Shewanella piezotolerans (strain WP3 / JCM 13877).